Here is a 161-residue protein sequence, read N- to C-terminus: Cell division protein SepF (161 aa).

It belongs to the SepF family. In terms of assembly, homodimer. Interacts with FtsZ.

The protein localises to the cytoplasm. Functionally, cell division protein that is part of the divisome complex and is recruited early to the Z-ring. Probably stimulates Z-ring formation, perhaps through the cross-linking of FtsZ protofilaments. Its function overlaps with FtsA. This Finegoldia magna (strain ATCC 29328 / DSM 20472 / WAL 2508) (Peptostreptococcus magnus) protein is Cell division protein SepF.